A 316-amino-acid chain; its full sequence is L-lactate dehydrogenase 3 (316 aa).

NAD(+) contacts are provided by valine 16, aspartate 37, arginine 42, and tyrosine 68. Arginine 91 provides a ligand contact to substrate. NAD(+) is bound by residues serine 104, 121 to 123 (ASN), and threonine 146. Substrate is bound at residue 123–126 (NPVD). Position 151–154 (151–154 (DSSR)) interacts with substrate. Residues arginine 156 and histidine 171 each coordinate beta-D-fructose 1,6-bisphosphate. Histidine 178 functions as the Proton acceptor in the catalytic mechanism. A substrate-binding site is contributed by threonine 233.

This sequence belongs to the LDH/MDH superfamily. LDH family. In terms of assembly, homotetramer.

It localises to the cytoplasm. The catalysed reaction is (S)-lactate + NAD(+) = pyruvate + NADH + H(+). The protein operates within fermentation; pyruvate fermentation to lactate; (S)-lactate from pyruvate: step 1/1. Its activity is regulated as follows. Allosterically activated by fructose 1,6-bisphosphate (FBP). Catalyzes the conversion of lactate to pyruvate. The polypeptide is L-lactate dehydrogenase 3 (Bacillus cereus (strain ATCC 10987 / NRS 248)).